Reading from the N-terminus, the 374-residue chain is S-adenosylmethionine:tRNA ribosyltransferase-isomerase (374 aa).

Belongs to the QueA family. Monomer.

It localises to the cytoplasm. The enzyme catalyses 7-aminomethyl-7-carbaguanosine(34) in tRNA + S-adenosyl-L-methionine = epoxyqueuosine(34) in tRNA + adenine + L-methionine + 2 H(+). Its pathway is tRNA modification; tRNA-queuosine biosynthesis. Its function is as follows. Transfers and isomerizes the ribose moiety from AdoMet to the 7-aminomethyl group of 7-deazaguanine (preQ1-tRNA) to give epoxyqueuosine (oQ-tRNA). The sequence is that of S-adenosylmethionine:tRNA ribosyltransferase-isomerase from Prochlorococcus marinus (strain AS9601).